Consider the following 662-residue polypeptide: DNA ligase (662 aa).

Residues 34 to 38, 83 to 84, and E113 contribute to the NAD(+) site; these read DYDYD and SI. The active-site N6-AMP-lysine intermediate is K115. The NAD(+) site is built by R136, E172, K286, and K310. Zn(2+) is bound by residues C404, C407, C422, and C427. The BRCT domain occupies 583–662; sequence RESSSCLGKT…NDLLKILYPN (80 aa).

This sequence belongs to the NAD-dependent DNA ligase family. LigA subfamily. Mg(2+) is required as a cofactor. It depends on Mn(2+) as a cofactor.

The catalysed reaction is NAD(+) + (deoxyribonucleotide)n-3'-hydroxyl + 5'-phospho-(deoxyribonucleotide)m = (deoxyribonucleotide)n+m + AMP + beta-nicotinamide D-nucleotide.. Its function is as follows. DNA ligase that catalyzes the formation of phosphodiester linkages between 5'-phosphoryl and 3'-hydroxyl groups in double-stranded DNA using NAD as a coenzyme and as the energy source for the reaction. It is essential for DNA replication and repair of damaged DNA. The protein is DNA ligase of Chlamydia caviae (strain ATCC VR-813 / DSM 19441 / 03DC25 / GPIC) (Chlamydophila caviae).